The following is a 700-amino-acid chain: MARTTPLDRYRNVGIMAHIDAGKTTTTERILLYTGRTHRIGEVHDGSATMDWMEQEQERGITITSAATTCFWKGMDGQFEDHRVNIIDTPGHVDFTIEVERSLKVLDSACAVFCAVGGVEPQSETVWRQANKYNVPRIGFVNKMDRSGADFLRVCKQIKTRLGGNPVPMQIAIGAEESFEGVIDLISMKAIFWNEVDQGATYETRDIPIELQGLAKEQYEFMVESAAEANDELMEKYLEESKLSNHDIKKGIRLRAIKSEIIPMFCGSAFKNKGVQAVLDAMIMYMPSPLDVDAITGISDDKDETVVPRKADDNEPFAALAFKIATDPFVGNLTFFRVYSGVLEAGDFVYNSSKGKKERIGRMVQMHSNERDEIKEVRAGDIAAAIGLKDVTTGDTLCDMKEKIILERMEFPEPVIALAVEPKTKADQEKMGIALGKLAAEDPSFRVSTDEESGQTIIAGMGELHLDIIVDRMVREFDVECNVGAPQVSYREAITTMVEHQHKFVKQSGGRGQYGHVYLRIEPQEPGTGYEFVDEIKGGVIPKEYMPAVNKGVQEQMENGVLAGFPLVDIKVTVYDGSYHDVDSNEIAFKIAASKCLSEGVKMANPQLLEPMMAVEVLTPEDYMGDVMGDINRRRGIVSAMEDMPAGKQVKAEVPLAEMFGYSNDLRSITQGRANYSMEFAKYTAAPKNVADEIIEKLNK.

Positions 8 to 290 (DRYRNVGIMA…AMIMYMPSPL (283 aa)) constitute a tr-type G domain. GTP is bound by residues 17 to 24 (AHIDAGKT), 88 to 92 (DTPGH), and 142 to 145 (NKMD).

This sequence belongs to the TRAFAC class translation factor GTPase superfamily. Classic translation factor GTPase family. EF-G/EF-2 subfamily.

The protein localises to the cytoplasm. In terms of biological role, catalyzes the GTP-dependent ribosomal translocation step during translation elongation. During this step, the ribosome changes from the pre-translocational (PRE) to the post-translocational (POST) state as the newly formed A-site-bound peptidyl-tRNA and P-site-bound deacylated tRNA move to the P and E sites, respectively. Catalyzes the coordinated movement of the two tRNA molecules, the mRNA and conformational changes in the ribosome. The chain is Elongation factor G from Vesicomyosocius okutanii subsp. Calyptogena okutanii (strain HA).